We begin with the raw amino-acid sequence, 911 residues long: MQQQHLFRLNILCLSLMTALPAYAENVQAGQAQEKQLDTIQVKAKKQKTRRDNEVTGLGKLVKTADTLSKEQVLDIRDLTRYDPGIAVVEQGRGASSGYSIRGMDKNRVSLTVDGLAQIQSYTAQAALGGTRTAGSSGAINEIEYENVKAVEISKGSNSVEQGSGALAGSVAFQTKTADDVIGEGRQWGIQSKTAYSGKNRGLTQSIALAGRIGGAEALLIHTGRRAGEIRAHEDAGRGVQSFNRLVPVEDSSEYAYFIVEDECEGKNYETCKSKPKKDVVGKDERQTVSTRDYTGPNRFLADPLSYESRSWLFRPGFRFENKRHYIGGILEHTQQTFDTRDMTVPAFLTKAVFDANSKQAGSLPGNGKYAGNHKYGGLFTNGENGALVGAEYGTGVFYDETHTKSRYGLEYVYTNADKDTWADYARLSYDRQGIGLDNHFQQTHCSADGSDKYCRPSADKPFSYYKSDRVIYGESHRLLQAAFKKSFDTAKIRHNLSVNLGFDRFDSNLRHQDYYYQHANRAYSSKTPPKTANPNGDKSKPYWVSIGGGNVVTGQICLFGNNTYTDCTPRSINGKSYYAAVRDNVRLGRWADVGAGLRYDYRSTHSDDGSVSTGTHRTLSWNAGIVLKPADWLDLTYRTSTGFRLPSFAEMYGWRSGVQSKAVKIDPEKSFNKEAGIVFKGDFGNLEASWFNNAYRDLIVRGYEAQIKNGKEEAKGDPAYLNAQSARITGINILGKIDWNGVWDKLPEGWYSTFAYNRVHVRDIKKRADRTDIQSHLFDAIQPSRYVVGLGYDQPEGKWGVNGMLTYSKAKEITELLGSRALLNGNSRNTKATARRTRPWYIVDVSGYYTIKKHFTLRAGVYNLLNYRYVTWENVRQTAGGAVNQHKNVGVYNRYAAPGRNYTFSLEMKF.

The signal sequence occupies residues 1 to 24 (MQQQHLFRLNILCLSLMTALPAYA). Residues 38–45 (DTIQVKAK) carry the TonB box motif. One can recognise a TBDR plug domain in the interval 51-176 (RDNEVTGLGK…LAGSVAFQTK (126 aa)). A TBDR beta-barrel domain is found at 187–911 (QWGIQSKTAY…NYTFSLEMKF (725 aa)). Residues 894–911 (NRYAAPGRNYTFSLEMKF) carry the TonB C-terminal box motif.

It belongs to the TonB-dependent receptor family. Binds both human apo- and holo-transferrin (TF), via the TF C-terminus. Forms a large complex with TF and TbpB.

Its subcellular location is the cell outer membrane. Its function is as follows. Neisseria acquires iron by extracting it from serum transferrin (TF) in its human host. Acts as a TF receptor and is required for TF utilization. Binds both apo- and holo-TF, via the TF C-terminus. In Neisseria meningitidis serogroup B, this protein is Transferrin-binding protein A.